The chain runs to 72 residues: Translation initiation factor IF-1 (72 aa).

Residues 1-72 form the S1-like domain; that stretch reads MSKTDVVEIE…TKGRIIWRDK (72 aa).

This sequence belongs to the IF-1 family. As to quaternary structure, component of the 30S ribosomal translation pre-initiation complex which assembles on the 30S ribosome in the order IF-2 and IF-3, IF-1 and N-formylmethionyl-tRNA(fMet); mRNA recruitment can occur at any time during PIC assembly.

It localises to the cytoplasm. Functionally, one of the essential components for the initiation of protein synthesis. Stabilizes the binding of IF-2 and IF-3 on the 30S subunit to which N-formylmethionyl-tRNA(fMet) subsequently binds. Helps modulate mRNA selection, yielding the 30S pre-initiation complex (PIC). Upon addition of the 50S ribosomal subunit IF-1, IF-2 and IF-3 are released leaving the mature 70S translation initiation complex. The chain is Translation initiation factor IF-1 from Lachnoclostridium phytofermentans (strain ATCC 700394 / DSM 18823 / ISDg) (Clostridium phytofermentans).